Reading from the N-terminus, the 329-residue chain is Prostaglandin reductase 1 (329 aa).

Residue threonine 18 is modified to Phosphothreonine. Serine 20 is subject to Phosphoserine. NADP(+) is bound by residues 152-155 (GAVG), lysine 178, tyrosine 193, asparagine 217, 239-245 (CGAISTY), 270-272 (FVV), and asparagine 321. Lysine 178 carries the post-translational modification N6-(2-hydroxyisobutyryl)lysine; alternate. Lysine 178 is modified (N6-acetyllysine; alternate).

Belongs to the NADP-dependent oxidoreductase L4BD family. As to quaternary structure, monomer or homodimer. As to expression, high expression in the kidney, liver, and intestine but not in leukocytes.

It is found in the cytoplasm. The catalysed reaction is 13,14-dihydro-15-oxo-prostaglandin E1 + NADP(+) = 15-oxoprostaglandin E1 + NADPH + H(+). It carries out the reaction 13,14-dihydro-15-oxo-prostaglandin E2 + NADP(+) = 15-oxoprostaglandin E2 + NADPH + H(+). The enzyme catalyses 13,14-dihydro-15-oxo-prostaglandin F1alpha + NADP(+) = 15-oxoprostaglandin F1alpha + NADPH + H(+). It catalyses the reaction 13,14-dihydro-15-oxo-PGF2alpha + NADP(+) = 15-oxoprostaglandin F2alpha + NADPH + H(+). The catalysed reaction is leukotriene B4 + NADP(+) = 12-oxo-leukotriene B4 + NADPH + H(+). It carries out the reaction 20-hydroxy-leukotriene B4 + NADP(+) = 12-oxo-20-hydroxy-leukotriene B4 + NADPH + H(+). The enzyme catalyses 6-trans-leukotriene B4 + NADP(+) = 12-oxo-(5S)-hydroxy-(6E,8E,10E,14Z)-eicosatetraenoate + NADPH + H(+). It catalyses the reaction (5S,12S)-dihydroxy-(6E,10E,12E,14Z)-eicosatetraenoate + NADP(+) = 12-oxo-(5S)-hydroxy-(6E,8E,10E,14Z)-eicosatetraenoate + NADPH + H(+). The catalysed reaction is an n-alkanal + NADP(+) = an alk-2-enal + NADPH + H(+). It carries out the reaction hexanal + NADP(+) = (E)-hex-2-enal + NADPH + H(+). The enzyme catalyses octanal + NADP(+) = (2E)-octenal + NADPH + H(+). It catalyses the reaction decanal + NADP(+) = (2E)-decenal + NADPH + H(+). The catalysed reaction is dodecanal + NADP(+) = (2E)-dodecenal + NADPH + H(+). It carries out the reaction 4-hydroxynonanal + NADP(+) = (E)-4-hydroxynon-2-enal + NADPH + H(+). The enzyme catalyses pentan-2-one + NADP(+) = (E)-pent-3-en-2-one + NADPH + H(+). It catalyses the reaction nonan-2-one + NADP(+) = (3E)-nonen-2-one + NADPH + H(+). Its function is as follows. NAD(P)H-dependent oxidoreductase involved in metabolic inactivation of pro- and anti-inflammatory eicosanoids: prostaglandins (PG), leukotrienes (LT) and lipoxins (LX). Catalyzes with high efficiency the reduction of the 13,14 double bond of 15-oxoPGs, including 15-oxo-PGE1, 15-oxo-PGE2, 15-oxo-PGF1-alpha and 15-oxo-PGF2-alpha. Catalyzes with lower efficiency the oxidation of the hydroxyl group at C12 of LTB4 and its derivatives, converting them into biologically less active 12-oxo-LTB4 metabolites. Reduces 15-oxo-LXA4 to 13,14 dihydro-15-oxo-LXA4, enhancing neutrophil recruitment at the inflammatory site. May play a role in metabolic detoxification of alkenals and ketones. Reduces alpha,beta-unsaturated alkenals and ketones, particularly those with medium-chain length, showing highest affinity toward (2E)-decenal and (3E)-3-nonen-2-one. May inactivate 4-hydroxy-2-nonenal, a cytotoxic lipid constituent of oxidized low-density lipoprotein particles. The chain is Prostaglandin reductase 1 (PTGR1) from Homo sapiens (Human).